Here is a 55-residue protein sequence, read N- to C-terminus: Beta-toxin Cn7 (55 aa).

Residues 1–55 form the LCN-type CS-alpha/beta domain; sequence KEGYIVNYHDGCKYECYKLGDNDYCLRECKLRVGKGAGGYCYAFACWCTHLYEQA. 3 disulfide bridges follow: C16-C41, C25-C46, and C29-C48.

This sequence belongs to the long (3 C-C) scorpion toxin superfamily. Sodium channel inhibitor family. Beta subfamily. As to expression, expressed by the venom gland.

It is found in the secreted. Beta toxins bind voltage-independently at site-4 of sodium channels (Nav) and shift the voltage of activation toward more negative potentials thereby affecting sodium channel activation and promoting spontaneous and repetitive firing. The chain is Beta-toxin Cn7 from Centruroides noxius (Mexican scorpion).